We begin with the raw amino-acid sequence, 267 residues long: Dihydropteroate synthase (267 aa).

The 251-residue stretch at 1–251 (MTKTKIMGIL…NVELNAKLAK (251 aa)) folds into the Pterin-binding domain. Asparagine 11 is a binding site for Mg(2+). Residues threonine 51, aspartate 84, asparagine 103, aspartate 167, lysine 203, and 239–241 (RVH) contribute to the (7,8-dihydropterin-6-yl)methyl diphosphate site.

This sequence belongs to the DHPS family. As to quaternary structure, homodimer. The cofactor is Mg(2+).

It catalyses the reaction (7,8-dihydropterin-6-yl)methyl diphosphate + 4-aminobenzoate = 7,8-dihydropteroate + diphosphate. It participates in cofactor biosynthesis; tetrahydrofolate biosynthesis; 7,8-dihydrofolate from 2-amino-4-hydroxy-6-hydroxymethyl-7,8-dihydropteridine diphosphate and 4-aminobenzoate: step 1/2. Functionally, catalyzes the condensation of para-aminobenzoate (pABA) with 6-hydroxymethyl-7,8-dihydropterin diphosphate (DHPt-PP) to form 7,8-dihydropteroate (H2Pte), the immediate precursor of folate derivatives. This chain is Dihydropteroate synthase (folP), found in Staphylococcus aureus (strain MW2).